A 309-amino-acid polypeptide reads, in one-letter code: Sulfate adenylyltransferase subunit 2 (309 aa).

Belongs to the PAPS reductase family. CysD subfamily. Heterodimer composed of CysD, the smaller subunit, and CysN.

It catalyses the reaction sulfate + ATP + H(+) = adenosine 5'-phosphosulfate + diphosphate. The protein operates within sulfur metabolism; hydrogen sulfide biosynthesis; sulfite from sulfate: step 1/3. In terms of biological role, with CysN forms the ATP sulfurylase (ATPS) that catalyzes the adenylation of sulfate producing adenosine 5'-phosphosulfate (APS) and diphosphate, the first enzymatic step in sulfur assimilation pathway. APS synthesis involves the formation of a high-energy phosphoric-sulfuric acid anhydride bond driven by GTP hydrolysis by CysN coupled to ATP hydrolysis by CysD. In Mycolicibacterium vanbaalenii (strain DSM 7251 / JCM 13017 / BCRC 16820 / KCTC 9966 / NRRL B-24157 / PYR-1) (Mycobacterium vanbaalenii), this protein is Sulfate adenylyltransferase subunit 2.